A 702-amino-acid chain; its full sequence is Sodium/hydrogen exchanger 6 (702 aa).

12 consecutive transmembrane segments (helical) span residues 72–92 (SANL…IWLF), 104–124 (GLAM…IHVP), 177–197 (VTFD…FYAG), 212–232 (ILAY…SIMY), 253–273 (CLLF…AIFH), 279–299 (VELY…AIVL), 325–345 (IGIF…TGVV), 373–393 (TFLL…FCGI), 415–435 (FELL…LTLF), 437–457 (FQNH…IFLG), 480–500 (NFQH…ALAI), and 516–536 (LLIV…MLSC).

The protein belongs to the monovalent cation:proton antiporter 1 (CPA1) transporter (TC 2.A.36) family. As to quaternary structure, homodimer. Interacts with RACK1; regulates the distribution of SLC9A6 between endosomes and the plasma membrane. Post-translationally, ubiquitinated (in vitro). Glycosylated.

The protein resides in the endosome membrane. Its subcellular location is the recycling endosome membrane. It is found in the early endosome membrane. The protein localises to the late endosome membrane. It localises to the cell membrane. The enzyme catalyses Na(+)(in) + H(+)(out) = Na(+)(out) + H(+)(in). The catalysed reaction is K(+)(in) + H(+)(out) = K(+)(out) + H(+)(in). In terms of biological role, endosomal Na(+), K(+)/H(+) antiporter. Mediates the electroneutral exchange of endosomal luminal H(+) for a cytosolic Na(+) or K(+). By facilitating proton efflux, SLC9A6 counteracts the acidity generated by vacuolar (V)-ATPase, thereby limiting luminal acidification. Responsible for alkalizing and maintaining the endosomal pH, and consequently in, e.g., endosome maturation and trafficking of recycling endosomal cargo. Plays a critical role during neurodevelopment by regulating synaptic development and plasticity. Implicated in the maintenance of cell polarity in a manner that is dependent on its ability to modulate intravesicular pH. Regulates intracelular pH in some specialized cells, osteoclasts and stereocilia where this transporter localizes to the plasma membrane. This is Sodium/hydrogen exchanger 6 (Slc9a6) from Mus musculus (Mouse).